A 188-amino-acid polypeptide reads, in one-letter code: dCTP deaminase (188 aa).

DCTP-binding positions include Lys-111–Arg-116, Thr-135–Glu-137, Gln-156, Tyr-170, and Gln-180. The active-site Proton donor/acceptor is the Glu-137.

This sequence belongs to the dCTP deaminase family. Homotrimer.

The enzyme catalyses dCTP + H2O + H(+) = dUTP + NH4(+). It functions in the pathway pyrimidine metabolism; dUMP biosynthesis; dUMP from dCTP (dUTP route): step 1/2. In terms of biological role, catalyzes the deamination of dCTP to dUTP. The chain is dCTP deaminase from Francisella philomiragia subsp. philomiragia (strain ATCC 25017 / CCUG 19701 / FSC 153 / O#319-036).